The chain runs to 208 residues: Putative vomeronasal receptor-like protein 4 (208 aa).

At 1–19 the chain is on the extracellular side; sequence MEMTKLFSYIVIKNVYYPQ. The helical transmembrane segment at 20–40 threads the bilayer; it reads VSFGISANTFLLLFHIFTFAY. Residues 41 to 48 lie on the Cytoplasmic side of the membrane; it reads THRLKPID. A helical membrane pass occupies residues 49–69; it reads MTISHLPLIHILLLFTQAILV. Over 70–97 the chain is Extracellular; it reads SSDLFESWNIQNNDLKCKIITFLNRVMR. A disulfide bond links Cys-86 and Cys-173. A helical transmembrane segment spans residues 98-118; that stretch reads GVSICTTCLLSVLQAITISPS. The Cytoplasmic segment spans residues 119 to 135; that stretch reads TSFLEKFKHISANHTLG. Residues 136–156 traverse the membrane as a helical segment; the sequence is FILFSWVLNMFITNNLLLFIV. Residues 157–183 lie on the Extracellular side of the membrane; that stretch reads PTPNRIGASLLFVTEHCYVLPMSYTHR. The helical transmembrane segment at 184–204 threads the bilayer; that stretch reads SLFFILMVLRDVIFIGLMVLS. The Cytoplasmic portion of the chain corresponds to 205-208; sequence SGYG.

It belongs to the G-protein coupled receptor 1 family. As to expression, expressed in olfactory nerve.

The protein localises to the cell membrane. Functionally, putative pheromone receptor. This is Putative vomeronasal receptor-like protein 4 (VN1R17P) from Homo sapiens (Human).